Here is a 360-residue protein sequence, read N- to C-terminus: Aminomethyltransferase (360 aa).

It belongs to the GcvT family. In terms of assembly, the glycine cleavage system is composed of four proteins: P, T, L and H.

It catalyses the reaction N(6)-[(R)-S(8)-aminomethyldihydrolipoyl]-L-lysyl-[protein] + (6S)-5,6,7,8-tetrahydrofolate = N(6)-[(R)-dihydrolipoyl]-L-lysyl-[protein] + (6R)-5,10-methylene-5,6,7,8-tetrahydrofolate + NH4(+). Its function is as follows. The glycine cleavage system catalyzes the degradation of glycine. This is Aminomethyltransferase from Pseudomonas syringae pv. tomato (strain ATCC BAA-871 / DC3000).